The sequence spans 55 residues: Large ribosomal subunit protein bL33 (55 aa).

Belongs to the bacterial ribosomal protein bL33 family.

In Agrobacterium fabrum (strain C58 / ATCC 33970) (Agrobacterium tumefaciens (strain C58)), this protein is Large ribosomal subunit protein bL33.